The chain runs to 346 residues: Parapinopsin (346 aa).

The Extracellular portion of the chain corresponds to 1–29 (MASIILINFSETDTLHLGSVNDHIMPRIG). Asn8 is a glycosylation site (N-linked (GlcNAc...) asparagine). A helical transmembrane segment spans residues 30–54 (YTILSIIMALSSTFGIILNMVVIIV). Over 55–66 (TVRYKQLRQPLN) the chain is Cytoplasmic. The chain crosses the membrane as a helical span at residues 67–91 (YALVNLAVADLGCPVFGGLLTAVTN). The Extracellular segment spans residues 92 to 106 (AMGYFSLGRVGCVLE). A disulfide bridge links Cys103 with Cys180. A helical membrane pass occupies residues 107–126 (GFAVAFFGIAGLCSVAVIAV). The Cytoplasmic portion of the chain corresponds to 127 to 145 (DRYMVVCRPLGAVMFQTKH). A helical transmembrane segment spans residues 146-169 (ALAGVVFSWVWSFIWNTPPLFGWG). Over 170 to 193 (SYQLEGVMTSCAPNWYRRDPVNVS) the chain is Extracellular. N-linked (GlcNAc...) asparagine glycosylation is present at Asn191. The chain crosses the membrane as a helical span at residues 194 to 221 (YILCYFMLCFALPFATIIFSYMHLLHTL). The Cytoplasmic segment spans residues 222 to 244 (WQVAKLQVADSGSTAKVEVQVAR). The chain crosses the membrane as a helical span at residues 245–268 (MVVIMVMAFLLTWLPYAAFALTVI). The Extracellular segment spans residues 269–276 (IDSNIYIN). The chain crosses the membrane as a helical span at residues 277 to 301 (PVIGTIPAYLAKSSTVFNPIIYIFM). Position 288 is an N6-(retinylidene)lysine (Lys288). Residues 302–346 (NRQFRDYALPCLLCGKNPWAAKEGRDSDTNTLTTTVSKNTSVSPL) are Cytoplasmic-facing. Cys315 carries the S-palmitoyl cysteine lipid modification. The segment at 325–346 (GRDSDTNTLTTTVSKNTSVSPL) is disordered. Over residues 330–346 (TNTLTTTVSKNTSVSPL) the composition is skewed to low complexity.

Belongs to the G-protein coupled receptor 1 family. Opsin subfamily. Post-translationally, phosphorylated on some or all of the serine and threonine residues present in the C-terminal region. As to expression, parapineal organ.

It is found in the membrane. This Ictalurus punctatus (Channel catfish) protein is Parapinopsin.